The sequence spans 318 residues: 2-desacetyl-2-hydroxyethyl bacteriochlorophyllide A dehydrogenase (318 aa).

It participates in porphyrin-containing compound metabolism; bacteriochlorophyll biosynthesis (light-independent). In terms of biological role, this protein catalyzes the penultimate step in bacteriochlorophyll a biosynthesis. This chain is 2-desacetyl-2-hydroxyethyl bacteriochlorophyllide A dehydrogenase (bchC), found in Cereibacter sphaeroides (strain ATCC 17023 / DSM 158 / JCM 6121 / CCUG 31486 / LMG 2827 / NBRC 12203 / NCIMB 8253 / ATH 2.4.1.) (Rhodobacter sphaeroides).